We begin with the raw amino-acid sequence, 179 residues long: CASP-like protein 5A2 (179 aa).

A disordered region spans residues 1 to 24 (MNVSHASVHPVEDPPAAATEVENP). Topologically, residues 1-38 (MNVSHASVHPVEDPPAAATEVENPPRVRMDDMEGMPGT) are cytoplasmic. The helical transmembrane segment at 39–59 (LLGLALRFFQFLFAAAALCVM) threads the bilayer. At 60–70 (ASTSDFPSVTA) the chain is on the extracellular side. The chain crosses the membrane as a helical span at residues 71-91 (FCYLVAATGLQSLWSLALAMV). The Cytoplasmic portion of the chain corresponds to 92 to 115 (DVYAIMVKRSLQNRRLVSLFAIGD). Residues 116-136 (GVTSTLTFAAACASAGITVLI) traverse the membrane as a helical segment. Topologically, residues 137-155 (DNDLNSCAQNHCVQFETST) are extracellular. The chain crosses the membrane as a helical span at residues 156–176 (ALAFISWFAALPSFLFNFWSL). The Cytoplasmic portion of the chain corresponds to 177-179 (ASR).

This sequence belongs to the Casparian strip membrane proteins (CASP) family. Homodimer and heterodimers.

It localises to the cell membrane. This chain is CASP-like protein 5A2, found in Arabidopsis thaliana (Mouse-ear cress).